Here is a 214-residue protein sequence, read N- to C-terminus: Adenylate kinase (214 aa).

Position 15–20 (15–20 (GAGKGT)) interacts with ATP. The segment at 35 to 64 (ASGDLFREAIKNQSVIGRKIAAIISQGGYV) is NMP. AMP-binding positions include Ser-36, Arg-41, 62–64 (GYV), 90–93 (GYPR), and Gln-97. Residues 127-164 (NRVICNNCNSVYNLLFQKPLVENSCDQCSAKLVKRSDD) form an LID region. Position 128 (Arg-128) interacts with ATP. Cys-131 and Cys-134 together coordinate Zn(2+). 137 to 138 (VY) contributes to the ATP binding site. 2 residues coordinate Zn(2+): Cys-151 and Cys-154. 2 residues coordinate AMP: Arg-161 and Arg-172. Leu-200 contributes to the ATP binding site.

Belongs to the adenylate kinase family. In terms of assembly, monomer.

The protein localises to the cytoplasm. It carries out the reaction AMP + ATP = 2 ADP. The protein operates within purine metabolism; AMP biosynthesis via salvage pathway; AMP from ADP: step 1/1. Its function is as follows. Catalyzes the reversible transfer of the terminal phosphate group between ATP and AMP. Plays an important role in cellular energy homeostasis and in adenine nucleotide metabolism. In Mycoplasma genitalium (strain ATCC 33530 / DSM 19775 / NCTC 10195 / G37) (Mycoplasmoides genitalium), this protein is Adenylate kinase.